A 462-amino-acid polypeptide reads, in one-letter code: Kinetochore protein nsk1 (462 aa).

Residues 104–120 (PSKNHETSLSPSKSTID) are compositionally biased toward polar residues. Disordered regions lie at residues 104 to 161 (PSKN…CPGI), 180 to 240 (EKYG…PLRT), and 320 to 462 (NQLF…NIQS). Over residues 121–138 (NNERKLDNEIDNYKHDVK) the composition is skewed to basic and acidic residues. Over residues 146 to 156 (GKTSNPSQGTT) the composition is skewed to polar residues. Residues 180–189 (EKYGKTDLGK) are compositionally biased toward basic and acidic residues. Positions 229 to 240 (KNRSSTFSPLRT) are enriched in polar residues. Residues 324-333 (KSEEEKDPVG) show a composition bias toward basic and acidic residues. Residues 422 to 444 (WPQNLAKNNINSEPNTPTKSNID) show a composition bias toward polar residues. A compositionally biased stretch (basic residues) spans 449-462 (HSARAHKTRKNIQS).

In terms of assembly, interacts with dlc1. The dlc1-nsk1 complex seems to oligomerize in chain-like structures. Also binds directly to spindle microtubules. Phosphorylated by cdk1 at prometaphase arrest. Phosphorylation prevents nsk1 kinetochore and spindle targeting. Dephosphorylated by clp1 at anaphase onset controls its relocalization.

The protein localises to the nucleus. It localises to the nucleolus. The protein resides in the cytoplasm. Its subcellular location is the cytoskeleton. It is found in the spindle. The protein localises to the chromosome. It localises to the centromere. The protein resides in the kinetochore. Ensures chromosome alignment and accurate chromosome segregation during mitosis. Promotes proper kinetochore-microtubule (k-MT) interactions during anaphase B. The phosphorylation status of nsk1 affects the proper k-MT coupling, ensuring that it interacts stably only at the correct time during mitosis. This chain is Kinetochore protein nsk1 (nsk1), found in Schizosaccharomyces pombe (strain 972 / ATCC 24843) (Fission yeast).